Consider the following 388-residue polypeptide: MNKILVINAGSSSIKFQLYDANEKVLAKGLCERIFIDGAFKYEFEDGSKDEGNSAFPTHKEALTHLLESLKKHKVINDLSEIVGVGHRVVQGAYWTDSTLITPQVLEKIYELAKLAPLHNKPEADVIDVVQKLIPKAKNVAVFDTSFHTSMPEVAYEYAIPREWKEKHLVRRYGYHGTSYRYVTKRFEQLLNKKAVNLVICHLGNGASIAAIKDSKSINTSMGFTPLEGLVMGTRSGDIDPSVVQYIAKQTNKTLDQVIDDLNKKSGLLGLSSYADMRDVTSNLPKTQLTLDVYTQRVADYILKYANQINASIDGLVFTAGVGENASLIIQEVVNKVHLLKVSLDPKAFEQKYSDYRKLSDDKSQLNVYQVRTNEEIMIMRDVVRLSK.

Asn8 serves as a coordination point for Mg(2+). Lys15 provides a ligand contact to ATP. A substrate-binding site is contributed by Arg88. The active-site Proton donor/acceptor is the Asp144. ATP-binding positions include His202–Gly206, Asp276–Arg278, and Gly321–Asn325. Residue Glu375 coordinates Mg(2+).

This sequence belongs to the acetokinase family. Homodimer. Mg(2+) serves as cofactor. Requires Mn(2+) as cofactor.

The protein localises to the cytoplasm. The enzyme catalyses acetate + ATP = acetyl phosphate + ADP. It functions in the pathway metabolic intermediate biosynthesis; acetyl-CoA biosynthesis; acetyl-CoA from acetate: step 1/2. Catalyzes the formation of acetyl phosphate from acetate and ATP. Can also catalyze the reverse reaction. The sequence is that of Acetate kinase from Mycoplasmoides gallisepticum (strain R(low / passage 15 / clone 2)) (Mycoplasma gallisepticum).